A 302-amino-acid polypeptide reads, in one-letter code: Trans-4-hydroxy-L-proline dehydratase activating enzyme (302 aa).

A Radical SAM core domain is found at 14-297; it reads HDGPGIRSTV…KRLFEASNFN (284 aa). Cys-28, Cys-32, Cys-35, Cys-54, Cys-57, Cys-60, and Cys-93 together coordinate [4Fe-4S] cluster. Residue 34-36 coordinates S-adenosyl-L-methionine; it reads WCH. 4Fe-4S ferredoxin-type domains are found at residues 45–74 and 75–103; these read KQVL…KGET and KICL…IVGQ. Residues Gly-133, 183–185, and His-257 each bind S-adenosyl-L-methionine; that span reads DIK.

This sequence belongs to the organic radical-activating enzymes family. It depends on [4Fe-4S] cluster as a cofactor.

It carries out the reaction glycyl-[protein] + reduced [flavodoxin] + S-adenosyl-L-methionine = glycin-2-yl radical-[protein] + semiquinone [flavodoxin] + 5'-deoxyadenosine + L-methionine + H(+). Catalyzes activation of the trans-4-hydroxy-L-proline dehydratase under anaerobic conditions by generation of an organic free radical on a glycine residue, via a homolytic cleavage of S-adenosyl-L-methionine (SAM). Is involved in the anaerobic degradation of 4-hydroxyproline. This is Trans-4-hydroxy-L-proline dehydratase activating enzyme from Clostridioides difficile (Peptoclostridium difficile).